Here is a 337-residue protein sequence, read N- to C-terminus: Monoacylglycerol lipase abhd6-A (337 aa).

The Extracellular portion of the chain corresponds to 1 to 19 (MDLDVLNMFLVAGGTLLVP). Residues 20–42 (ILAFVTSFLLWPAALIKIYYWYW) traverse the membrane as a helical; Signal-anchor for type II membrane protein segment. Topologically, residues 43-337 (RRALGMQVKF…QSTENNKKHE (295 aa)) are cytoplasmic. Residues 73–313 (SVLMLHGFSA…CGHSVVMERP (241 aa)) enclose the AB hydrolase-1 domain. S148 acts as the Nucleophile in catalysis. Active-site charge relay system residues include D278 and H306.

It belongs to the AB hydrolase superfamily.

It is found in the late endosome membrane. The protein localises to the lysosome membrane. It localises to the mitochondrion membrane. The catalysed reaction is Hydrolyzes glycerol monoesters of long-chain fatty acids.. It carries out the reaction 1-octanoylglycerol + H2O = octanoate + glycerol + H(+). It catalyses the reaction 1-decanoylglycerol + H2O = decanoate + glycerol + H(+). The enzyme catalyses 1-dodecanoylglycerol + H2O = dodecanoate + glycerol + H(+). The catalysed reaction is 1-tetradecanoylglycerol + H2O = tetradecanoate + glycerol + H(+). It carries out the reaction 2-hexadecanoylglycerol + H2O = glycerol + hexadecanoate + H(+). It catalyses the reaction 2-(9Z-octadecenoyl)-glycerol + H2O = glycerol + (9Z)-octadecenoate + H(+). The enzyme catalyses 1-(9Z-octadecenoyl)-glycerol + H2O = glycerol + (9Z)-octadecenoate + H(+). The catalysed reaction is 2-(9Z,12Z-octadecadienoyl)-glycerol + H2O = (9Z,12Z)-octadecadienoate + glycerol + H(+). It carries out the reaction 2-(5Z,8Z,11Z,14Z-eicosatetraenoyl)-glycerol + H2O = glycerol + (5Z,8Z,11Z,14Z)-eicosatetraenoate + H(+). It catalyses the reaction 1-(5Z,8Z,11Z,14Z-eicosatetraenoyl)-glycerol + H2O = glycerol + (5Z,8Z,11Z,14Z)-eicosatetraenoate + H(+). The enzyme catalyses 1-(9Z,12Z-octadecadienoyl)-glycerol + H2O = (9Z,12Z)-octadecadienoate + glycerol + H(+). The catalysed reaction is 3-(9Z-octadecenoyl)-sn-glycero-1-phospho-(3'-(9Z-octadecenoyl)-1'-sn-glycerol) + H2O = 3-(9Z-octadecenoyl)-sn-glycero-1-phospho-(1'-sn-glycerol) + (9Z)-octadecenoate + H(+). It carries out the reaction (S,S)-2-(9Z-octadecenoyl)-sn-glycero-1-phospho-(2'-(9Z-octadecenoyl)-1'-sn-glycerol) + H2O = (S,S)-2-(9Z-octadecenoyl)-sn-glycero-1-phospho-(1'-sn-glycerol) + (9Z)-octadecenoate + H(+). It catalyses the reaction (R,R)-2-(9Z-octadecenoyl)-sn-glycero-3-phospho-(2'-(9Z-octadecenoyl)-3'-sn-glycerol) + H2O = (R,R)-2-(9Z-octadecenoyl)-sn-glycero-3-phospho-(3'-sn-glycerol) + (9Z)-octadecenoate + H(+). Functionally, lipase that preferentially hydrolysis medium-chain saturated monoacylglycerols including 2-arachidonoylglycerol. Through 2-arachidonoylglycerol degradation may regulate endocannabinoid signaling pathways. Also has a lysophosphatidyl lipase activity with a preference for lysophosphatidylglycerol among other lysophospholipids. Also able to degrade bis(monoacylglycero)phosphate (BMP) and constitutes the major enzyme for BMP catabolism. BMP, also known as lysobisphosphatidic acid, is enriched in late endosomes and lysosomes and plays a key role in the formation of intraluminal vesicles and in lipid sorting. In Xenopus laevis (African clawed frog), this protein is Monoacylglycerol lipase abhd6-A (abhd6-a).